A 66-amino-acid polypeptide reads, in one-letter code: FMRFamide-like neuropeptide 21 (66 aa).

The first 16 residues, 1 to 16 (MRLFILLSCLLAWVLA), serve as a signal peptide directing secretion.

The protein belongs to the FARP (FMRFamide related peptide) family. In terms of processing, may be processed by convertase egl-3. Expressed in the ADL, ASE and ASH sensory neurons, the URA motor neurons and the MC, M2 and M4 pharyngeal neurons.

The protein localises to the secreted. FMRFamide-like neuropeptide. Involved in modulating locomotion quiescence during the sleep-like state called lethargus which occurs during molting between larval and adult stages, acting via the G-protein coupled receptor npr-1. Plays a role in modulating social and feeding behavior. Functionally, ligand to G-protein coupled receptor npr-1. The sequence is that of FMRFamide-like neuropeptide 21 from Caenorhabditis elegans.